The following is a 124-amino-acid chain: uncharacterized protein (124 aa).

The N-terminal stretch at 1–18 is a signal peptide; the sequence is MHIIKTLISVGVAFSLSA. Cys-19 carries the N-palmitoyl cysteine lipid modification. Cys-19 carries S-diacylglycerol cysteine lipidation.

It localises to the cell membrane. This is an uncharacterized protein from Pasteurella multocida (strain Pm70).